Reading from the N-terminus, the 221-residue chain is Serine/arginine-rich splicing factor 9 (221 aa).

RRM domains lie at 14-89 (GRIY…FPRT) and 111-187 (FRVL…PERS). Lys36 is covalently cross-linked (Glycyl lysine isopeptide (Lys-Gly) (interchain with G-Cter in SUMO2)). The interaction with SAFB1 stretch occupies residues 188–200 (TSYGYSRSRSGSR). Ser189 is subject to Phosphoserine. Low complexity predominate over residues 189–198 (SYGYSRSRSG). Residues 189–221 (SYGYSRSRSGSRGRDSPYQSRGSPHYFSPFRPY) form a disordered region. Tyr192 carries the post-translational modification Phosphotyrosine. A phosphoserine mark is found at Ser193, Ser195, Ser204, Ser208, and Ser211. Tyr214 carries the post-translational modification Phosphotyrosine. Residue Ser216 is modified to Phosphoserine.

This sequence belongs to the splicing factor SR family. As to quaternary structure, interacts with KHDRBS3. Interacts with HABP4. Interacts with NOL3/ARC/NOP30. Interacts with NSEP1/YB-1/YB1. Interacts with SAFB/SAFB1. Interacts with SRSF6/SFRS6. Interacts with TRA2B/SFRS10. Interacts with C1QBP. May also interact with DUSP11/PIR1. In terms of processing, extensively phosphorylated on serine residues in the RS domain. Expressed at high levels in the heart, kidney, pancreas and placenta, and at lower levels in the brain, liver, lung and skeletal muscle.

It localises to the nucleus. Its function is as follows. Plays a role in constitutive splicing and can modulate the selection of alternative splice sites. Represses the splicing of MAPT/Tau exon 10. This Homo sapiens (Human) protein is Serine/arginine-rich splicing factor 9 (SRSF9).